A 172-amino-acid chain; its full sequence is Small ribosomal subunit protein uS5 (172 aa).

Residues 17–80 form the S5 DRBM domain; sequence LKEKMIAVNR…EEARRNMTKV (64 aa).

Belongs to the universal ribosomal protein uS5 family. Part of the 30S ribosomal subunit. Contacts proteins S4 and S8.

With S4 and S12 plays an important role in translational accuracy. Its function is as follows. Located at the back of the 30S subunit body where it stabilizes the conformation of the head with respect to the body. This chain is Small ribosomal subunit protein uS5, found in Polaromonas sp. (strain JS666 / ATCC BAA-500).